The primary structure comprises 124 residues: Ribonuclease pancreatic (124 aa).

A compositionally biased stretch (basic and acidic residues) spans 1 to 13 (KETAAAKFERQHI). The segment at 1-24 (KETAAAKFERQHIDSNPSSVSSSN) is disordered. Residues K7 and R10 each coordinate substrate. Catalysis depends on H12, which acts as the Proton acceptor. Positions 15-24 (SNPSSVSSSN) are enriched in low complexity. Intrachain disulfides connect C26-C84, C40-C95, C58-C110, and C65-C72. N34 carries an N-linked (GlcNAc...) asparagine; partial glycan. Residues 41-45 (KPVNT), K66, and R85 contribute to the substrate site. Residue H119 is the Proton donor of the active site.

It belongs to the pancreatic ribonuclease family. Monomer. Interacts with and forms tight 1:1 complexes with RNH1. Dimerization of two such complexes may occur. Interaction with RNH1 inhibits this protein. As to expression, pancreas.

It localises to the secreted. The catalysed reaction is an [RNA] containing cytidine + H2O = an [RNA]-3'-cytidine-3'-phosphate + a 5'-hydroxy-ribonucleotide-3'-[RNA].. The enzyme catalyses an [RNA] containing uridine + H2O = an [RNA]-3'-uridine-3'-phosphate + a 5'-hydroxy-ribonucleotide-3'-[RNA].. In terms of biological role, endonuclease that catalyzes the cleavage of RNA on the 3' side of pyrimidine nucleotides. Acts on single-stranded and double-stranded RNA. The chain is Ribonuclease pancreatic (RNASE1) from Antilocapra americana (Pronghorn).